The sequence spans 347 residues: DNA-directed RNA polymerase subunit alpha (347 aa).

Positions 1-243 (MLIKQGERLI…DQISVFINFD (243 aa)) are alpha N-terminal domain (alpha-NTD). The segment at 260-347 (VNEHLFKSID…EWKRKQQNEA (88 aa)) is alpha C-terminal domain (alpha-CTD).

This sequence belongs to the RNA polymerase alpha chain family. Homodimer. The RNAP catalytic core consists of 2 alpha, 1 beta, 1 beta' and 1 omega subunit. When a sigma factor is associated with the core the holoenzyme is formed, which can initiate transcription.

The enzyme catalyses RNA(n) + a ribonucleoside 5'-triphosphate = RNA(n+1) + diphosphate. Its function is as follows. DNA-dependent RNA polymerase catalyzes the transcription of DNA into RNA using the four ribonucleoside triphosphates as substrates. This is DNA-directed RNA polymerase subunit alpha from Desulfovibrio desulfuricans (strain ATCC 27774 / DSM 6949 / MB).